Here is a 445-residue protein sequence, read N- to C-terminus: tRNA modification GTPase MnmE (445 aa).

Positions 20, 79, and 119 each coordinate (6S)-5-formyl-5,6,7,8-tetrahydrofolate. The TrmE-type G domain maps to 215-371 (GLKLAIIGPP…ILKNIENIAE (157 aa)). Asn-225 contributes to the K(+) binding site. GTP-binding positions include 225-230 (NTGKSS), 244-250 (SNIAGTT), and 269-272 (DTAG). Ser-229 is a binding site for Mg(2+). K(+)-binding residues include Ser-244, Ile-246, and Thr-249. Thr-250 is a Mg(2+) binding site. Lys-445 contributes to the (6S)-5-formyl-5,6,7,8-tetrahydrofolate binding site.

The protein belongs to the TRAFAC class TrmE-Era-EngA-EngB-Septin-like GTPase superfamily. TrmE GTPase family. In terms of assembly, homodimer. Heterotetramer of two MnmE and two MnmG subunits. K(+) serves as cofactor.

It localises to the cytoplasm. In terms of biological role, exhibits a very high intrinsic GTPase hydrolysis rate. Involved in the addition of a carboxymethylaminomethyl (cmnm) group at the wobble position (U34) of certain tRNAs, forming tRNA-cmnm(5)s(2)U34. In Rickettsia prowazekii (strain Madrid E), this protein is tRNA modification GTPase MnmE.